The sequence spans 285 residues: 4-hydroxybenzoate octaprenyltransferase (285 aa).

Transmembrane regions (helical) follow at residues proline 17–glycine 37, proline 41–isoleucine 61, leucine 92–leucine 112, histidine 135–alanine 155, glycine 158–tyrosine 178, alanine 216–leucine 236, and alanine 263–leucine 283.

The protein belongs to the UbiA prenyltransferase family. Requires Mg(2+) as cofactor.

It localises to the cell inner membrane. It catalyses the reaction all-trans-octaprenyl diphosphate + 4-hydroxybenzoate = 4-hydroxy-3-(all-trans-octaprenyl)benzoate + diphosphate. It participates in cofactor biosynthesis; ubiquinone biosynthesis. Its function is as follows. Catalyzes the prenylation of para-hydroxybenzoate (PHB) with an all-trans polyprenyl group. Mediates the second step in the final reaction sequence of ubiquinone-8 (UQ-8) biosynthesis, which is the condensation of the polyisoprenoid side chain with PHB, generating the first membrane-bound Q intermediate 3-octaprenyl-4-hydroxybenzoate. This chain is 4-hydroxybenzoate octaprenyltransferase, found in Nitrosococcus oceani (strain ATCC 19707 / BCRC 17464 / JCM 30415 / NCIMB 11848 / C-107).